We begin with the raw amino-acid sequence, 1020 residues long: Neurofilament heavy polypeptide (1020 aa).

Residues 1–100 form a head region; that stretch reads MMSFGGADAL…VATSRSEKEQ (100 aa). Positions 58-83 are disordered; that stretch reads VSASPSRFRGAGAASSTDSLDTLSNG. Over residues 71 to 82 the composition is skewed to polar residues; the sequence is ASSTDSLDTLSN. Residues Ser76 and Ser124 each carry the phosphoserine modification. Residues 97–413 enclose the IF rod domain; sequence EKEQLQALND…KLLEGEECRI (317 aa). The tract at residues 101–132 is coil 1A; the sequence is LQALNDRFAGYIDKVRQLEAHNRSLEGEAAAL. The linker 1 stretch occupies residues 133–145; it reads RQQQAGRSAMGEL. The segment at 146 to 244 is coil 1B; sequence YEREVREMRG…QEEVGELLGQ (99 aa). The linker 12 stretch occupies residues 245 to 266; the sequence is IQGSGAAQAQMQAETRDALKCD. Positions 267 to 288 are coil 2A; that stretch reads VTSALREIRAQLEGHAVQSTLQ. The segment at 289–292 is linker 2; it reads SEEW. The tract at residues 293 to 413 is coil 2B; sequence FRVRLDRLSE…KLLEGEECRI (121 aa). Residues Ser347 and Ser421 each carry the phosphoserine modification. The tract at residues 414–1020 is tail; sequence GFGPIPFSLP…ATEDKAAKGK (607 aa). The disordered stretch occupies residues 456-1020; the sequence is IVEEQTEETQ…ATEDKAAKGK (565 aa). 2 stretches are compositionally biased toward acidic residues: residues 459–475 and 483–498; these read EQTE…EEEE and GKEE…EGGE. A phosphoserine mark is found at Ser511, Ser526, Ser532, Ser540, Ser546, Ser552, Ser560, Ser566, Ser574, Ser580, Ser586, Ser594, Ser600, Ser606, Ser614, Ser620, Ser628, Ser634, Ser640, Ser648, Ser654, Ser662, Ser668, Ser676, Ser682, Ser690, Ser696, and Ser704. Residues 511–1020 are compositionally biased toward basic and acidic residues; sequence SPEKEAKSPV…ATEDKAAKGK (510 aa). Tandem repeats lie at residues 525–530, 531–536, 539–544, and 545–550. The segment at 525–826 is 30 X 6 AA repeats of K-S-P-[AEPV]-[EAK]-[AEVK]; sequence KSPAEAKSPE…KEEVKSPVKE (302 aa). The stretch at 559–564 is repeat 5; the sequence is KSPPEA. Repeat copies occupy residues 573–578 and 579–584. Tandem repeats lie at residues 593 to 598 and 599 to 604. The stretch at 613–618 is repeat 10; the sequence is KSPAEA. Tandem repeats lie at residues 627 to 632, 633 to 638, 639 to 644, and 647 to 652. 12 repeat units span residues 661–666, 667–672, 675–680, 681–686, 689–694, 695–700, 703–708, 709–714, 717–722, 723–728, 737–742, and 745–750. Phosphoserine occurs at positions 718, 724, and 738. 2 positions are modified to phosphoserine: Ser752 and Ser763. The stretch at 762 to 767 is repeat 27; it reads KSPEAK. A Phosphothreonine modification is found at Thr768. Repeat copies occupy residues 786–791, 794–799, and 821–826. Ser787, Ser795, Ser822, and Ser888 each carry phosphoserine.

Belongs to the intermediate filament family. Forms heterodimers with NEFL; which can further hetero-oligomerize (in vitro). Forms heterodimers with INA (in vitro). Post-translationally, there are a number of repeats of the tripeptide K-S-P, NFH is phosphorylated on a number of the serines in this motif. It is thought that phosphorylation of NFH results in the formation of interfilament cross bridges that are important in the maintenance of axonal caliber. In terms of processing, phosphorylation seems to play a major role in the functioning of the larger neurofilament polypeptides (NF-M and NF-H), the levels of phosphorylation being altered developmentally and coincidentally with a change in the neurofilament function. Phosphorylated in the head and rod regions by the PKC kinase PKN1, leading to the inhibition of polymerization.

The protein localises to the cytoplasm. It localises to the cytoskeleton. It is found in the cell projection. Its subcellular location is the axon. Neurofilaments usually contain three intermediate filament proteins: NEFL, NEFM, and NEFH which are involved in the maintenance of neuronal caliber. NEFH has an important function in mature axons that is not subserved by the two smaller NF proteins. May additionally cooperate with the neuronal intermediate filament proteins PRPH and INA to form neuronal filamentous networks. The sequence is that of Neurofilament heavy polypeptide (NEFH) from Homo sapiens (Human).